Reading from the N-terminus, the 74-residue chain is Defensin-like protein (74 aa).

The first 28 residues, 1-28 (MEMRKSCGFFFLLLLLVFASQVVVQTEG), serve as a signal peptide directing secretion. Intrachain disulfides connect cysteine 31/cysteine 74, cysteine 42/cysteine 62, cysteine 48/cysteine 68, and cysteine 52/cysteine 70.

Belongs to the DEFL family. Protease inhibitor I18 (RTI/MTI-2) subfamily.

It is found in the secreted. This chain is Defensin-like protein, found in Glycine max (Soybean).